Reading from the N-terminus, the 2065-residue chain is Cytoskeleton-associated protein 5-A (2065 aa).

2 TOG regions span residues 1–240 (MGDD…DLKA) and 264–515 (VDAY…KETK). HEAT repeat units lie at residues 120–157 (EKAE…EFGS), 160–197 (MTLK…WIRD), 270–311 (LEAV…NPKI), 314–352 (GDFA…GLRK), 356–393 (SYAG…TTTL), 395–432 (NISE…STLP), and 436–477 (LKPF…VNPF). Positions 500 to 574 (NGKKGGAAAG…GATAKGKKAV (75 aa)) are disordered. Over residues 538–568 (KAAAAPKKAPAAKPGGPVKKAKAPASSGATA) the composition is skewed to low complexity. Residues 644–808 (KPGFKETNFQ…LSQIDAEFEK (165 aa)) form a TOG 3 region. HEAT repeat units follow at residues 652–689 (FQVM…KVGD) and 748–785 (INVK…YMGA). The segment at 809–849 (MKGQTPPVSIRGSKHGSGRDEGEEGEEQDEDAPADVTDLLP) is disordered. Acidic residues predominate over residues 829–841 (EGEEGEEQDEDAP). The TOG 4 stretch occupies residues 846-1090 (DLLPRTDISD…AGPPGKASSK (245 aa)). HEAT repeat units follow at residues 852–889 (DISD…EAKF), 892–929 (PSIG…AMGH), 933–970 (QHVK…QTGM), and 1015–1052 (CVPY…KMSK). Residues 1074-1115 (ASMPAKPAGPPGKASSKQPPAVAQASASPPPAASSDSGSSTS) are compositionally biased toward low complexity. Residues 1074-1192 (ASMPAKPAGP…AKDEEDKSGP (119 aa)) are disordered. The segment covering 1126–1163 (PGTQASKAKTQSVSSEGNTSLNPSNTSLTPSKANTSLS) has biased composition (polar residues). The interaction with microtubule lattice stretch occupies residues 1150–1235 (NTSLTPSKAN…IEQLKTQMSP (86 aa)). Residues 1191–1460 (GPIYIIVPNG…ERIKRAGKKQ (270 aa)) form a TOG 5 region. HEAT repeat units lie at residues 1251-1288 (QRQI…RFFD), 1295-1318 (MKCL…LTEM), 1319-1355 (EGTS…VYPA), 1357-1390 (KMFN…SYGM), and 1395-1432 (PTPA…VHGE). 2 disordered regions span residues 1982–2001 (DNAK…KSSA) and 2028–2065 (VELD…SSRK). Residues 2002 to 2065 (PAVVSSTDML…RLERIKSSRK (64 aa)) are interaction with tacc3. Residues 2038 to 2048 (STTTSSSASST) show a composition bias toward low complexity. Residues 2051 to 2065 (DDLKKRLERIKSSRK) are compositionally biased toward basic and acidic residues.

This sequence belongs to the TOG/XMAP215 family. In terms of assembly, interacts with tacc3; two molecules of ckap5 interact with 1 molecule of tacc3 probably mediated by coiled coil domains forming a four-helix bundle. Interacts with tacc3 and clathrin forming the TACC3/ch-TOG/clathrin complex located at spindle inter-microtubules bridges. Interacts with ndc80; indicative for an association with the NDC80 comnplex.

The protein resides in the cytoplasm. It localises to the cytoskeleton. It is found in the spindle pole. Its subcellular location is the spindle. The protein localises to the microtubule organizing center. The protein resides in the centrosome. It localises to the chromosome. It is found in the centromere. Its subcellular location is the kinetochore. Its function is as follows. Binds to the plus end of microtubules and regulates microtubule dynamics and microtubule organization. Acts as a processive microtubule polymerase. Promotes cytoplasmic microtubule nucleation and elongation. Plays a major role in organizing spindle poles. In spindle formation protects kinetochore microtubules from depolymerization by kif2c and has an essential role in centrosomal microtubule assembly independently of kif2c activity. Contributes to centrosome integrity. Acts as a component of the TACC3/ch-TOG/clathrin complex proposed to contribute to stabilization of kinetochore fibers of the mitotic spindle by acting as inter-microtubule bridge. Enhances the strength of NDC80 complex-mediated kinetochore-tip microtubule attachments. This is Cytoskeleton-associated protein 5-A (ckap5-a) from Xenopus laevis (African clawed frog).